The primary structure comprises 325 residues: MTSHLLKAEIHCHLEGAAPPALVVKQAEKYGIDTSGFLRDGQYVWSDFAEFIQCYDAVAQVFKSDEDYAVLTETYLTELAEANTIYSELIISPDHGDRIGLGADAYLAGVAEGIRIAKEKTGIETRIIVTGERHFGPERVIAAAEYAARIRHPLVTGFNMAGEERMGRVADYARAFDIARDAGLGLTIHAGEVCGPESVADALDLVKPSRIGHGVRAIEDAALISRLVETGTVLEVCPGSNIALSVYPDFASHPLKALSDAGVRVCISSDDPPFFFTSLAREYALAADAFGFNDAEINRMTRTALECAFVDEATRERLLARLGDA.

Residues H11, H13, and H189 each contribute to the Zn(2+) site. The active-site Proton donor is E192. D270 provides a ligand contact to Zn(2+). D271 contacts substrate.

Belongs to the metallo-dependent hydrolases superfamily. Adenosine and AMP deaminases family. Adenine deaminase type 2 subfamily. It depends on Zn(2+) as a cofactor.

The enzyme catalyses adenine + H2O + H(+) = hypoxanthine + NH4(+). Functionally, catalyzes the hydrolytic deamination of adenine to hypoxanthine. Plays an important role in the purine salvage pathway and in nitrogen catabolism. This chain is Adenine deaminase, found in Agrobacterium fabrum (strain C58 / ATCC 33970) (Agrobacterium tumefaciens (strain C58)).